The chain runs to 235 residues: Protein MAINTENANCE OF PSII UNDER HIGH LIGHT 1 (235 aa).

Residues 127–147 (TAAIVAGIALIAVAAASSILL) form a helical membrane-spanning segment. The tract at residues 181–235 (QPSTPSVTEAPPVAELETSLPETPSVAQQETSLPETMASEAQPEASSVPTTSSTS) is disordered. 2 stretches are compositionally biased toward polar residues: residues 200–214 (LPETPSVAQQETSLP) and 224–235 (EASSVPTTSSTS).

As to quaternary structure, interacts with psbA, psbB, psbC and psbD.

It is found in the plastid. It localises to the chloroplast thylakoid membrane. Interacts with photosystem II (PSII) core complexes and participates in the maintenance of normal PSII activity under photoinhibitory stress. May protect against photodamage or stabilize PSII under high-light stress. Participates in the maintainance of proper PSII function under high-light stress by protecting PSII from photooxidative damage. The sequence is that of Protein MAINTENANCE OF PSII UNDER HIGH LIGHT 1 from Arabidopsis thaliana (Mouse-ear cress).